The primary structure comprises 1094 residues: Centrosomal protein of 128 kDa (1094 aa).

Positions 1 to 29 are disordered; the sequence is MAESSSESDHFRCRDRLSPWAARSTHRGT. Positions 7-17 are enriched in basic and acidic residues; it reads ESDHFRCRDRL. Position 31 is a phosphoserine (Ser31). The interval 115-140 is disordered; the sequence is DGGTGSELHHFPPTSPLKDYGDPQGI. Coiled coils occupy residues 190–827 and 879–959; these read SRSD…QESI and EELK…IALE. A phosphoserine mark is found at Ser249, Ser291, and Ser331. The tract at residues 319-345 is disordered; it reads AEGDRKGLQHQVSQISKQQSNYQDEQG. Polar residues predominate over residues 328–342; that stretch reads HQVSQISKQQSNYQD. The span at 987–999 shows a compositional bias: basic and acidic residues; it reads DSCSSSERTDGRY. The segment at 987 to 1018 is disordered; that stretch reads DSCSSSERTDGRYSKYRVRRNSLQHHQDDTKY. Positions 1000-1009 are enriched in basic residues; it reads SKYRVRRNSL. A Phosphoserine modification is found at Ser1061. Positions 1067–1094 are disordered; that stretch reads VAPDSASNKEDATMNGTSSQPKKEEYGS.

It is found in the cytoplasm. Its subcellular location is the cytoskeleton. It localises to the microtubule organizing center. The protein localises to the centrosome. The protein resides in the centriole. It is found in the spindle pole. This Homo sapiens (Human) protein is Centrosomal protein of 128 kDa (CEP128).